Consider the following 881-residue polypeptide: DNA mismatch repair protein MutS (881 aa).

627-634 (GPNMGGKS) is a binding site for ATP.

It belongs to the DNA mismatch repair MutS family.

Functionally, this protein is involved in the repair of mismatches in DNA. It is possible that it carries out the mismatch recognition step. This protein has a weak ATPase activity. In Acinetobacter baumannii (strain AB307-0294), this protein is DNA mismatch repair protein MutS.